We begin with the raw amino-acid sequence, 375 residues long: 23S rRNA (uracil(747)-C(5))-methyltransferase RlmC (375 aa).

Positions 3, 11, 14, and 87 each coordinate [4Fe-4S] cluster. Residues Gln212, Phe241, Glu262, and Asn307 each contribute to the S-adenosyl-L-methionine site. Residue Cys334 is the Nucleophile of the active site.

This sequence belongs to the class I-like SAM-binding methyltransferase superfamily. RNA M5U methyltransferase family. RlmC subfamily.

It catalyses the reaction uridine(747) in 23S rRNA + S-adenosyl-L-methionine = 5-methyluridine(747) in 23S rRNA + S-adenosyl-L-homocysteine + H(+). Its function is as follows. Catalyzes the formation of 5-methyl-uridine at position 747 (m5U747) in 23S rRNA. The polypeptide is 23S rRNA (uracil(747)-C(5))-methyltransferase RlmC (Escherichia coli (strain SE11)).